The primary structure comprises 328 residues: Diacetylchitobiose uptake system permease protein DasB (328 aa).

A disordered region spans residues 1-27; sequence MTVQTERPPSGPSDVRKADGGGTGGTR. Transmembrane regions (helical) follow at residues 36 to 56, 104 to 124, 134 to 154, 188 to 208, 247 to 267, and 297 to 317; these read ALAP…LLGW, IIFT…IGLL, FVLM…ATTV, FSTF…FVAI, FLYA…VQVY, and MGAA…AYYL. In terms of domain architecture, ABC transmembrane type-1 spans 100–316; that stretch reads TVRSIIFTAV…LILLGLTAYY (217 aa).

This sequence belongs to the binding-protein-dependent transport system permease family. The complex is composed of two ATP-binding proteins (MsiK), two transmembrane proteins (DasB and DasC) and a solute-binding protein (DasA).

The protein localises to the cell membrane. Functionally, part of the ABC transporter complex DasABC-MsiK involved in N,N'-diacetylchitobiose ((GlcNAc)2) uptake. Responsible for the translocation of the substrate across the membrane. In Streptomyces coelicolor (strain ATCC BAA-471 / A3(2) / M145), this protein is Diacetylchitobiose uptake system permease protein DasB.